Here is a 70-residue protein sequence, read N- to C-terminus: MGAIAAGIAAGLAAVGAGVGNGLVIGHTLDGMARQPEMSGQLRGTMFLGVGLIEALPILSIVIAFLVMNK.

2 helical membrane passes run 4-24 (IAAG…NGLV) and 47-67 (FLGV…AFLV).

It belongs to the ATPase C chain family. F-type ATPases have 2 components, F(1) - the catalytic core - and F(0) - the membrane proton channel. F(1) has five subunits: alpha(3), beta(3), gamma(1), delta(1), epsilon(1). F(0) has three main subunits: a(1), b(2) and c(10-14). The alpha and beta chains form an alternating ring which encloses part of the gamma chain. F(1) is attached to F(0) by a central stalk formed by the gamma and epsilon chains, while a peripheral stalk is formed by the delta and b chains.

The protein resides in the cell membrane. In terms of biological role, f(1)F(0) ATP synthase produces ATP from ADP in the presence of a proton or sodium gradient. F-type ATPases consist of two structural domains, F(1) containing the extramembraneous catalytic core and F(0) containing the membrane proton channel, linked together by a central stalk and a peripheral stalk. During catalysis, ATP synthesis in the catalytic domain of F(1) is coupled via a rotary mechanism of the central stalk subunits to proton translocation. Its function is as follows. Key component of the F(0) channel; it plays a direct role in translocation across the membrane. A homomeric c-ring of between 10-14 subunits forms the central stalk rotor element with the F(1) delta and epsilon subunits. This chain is ATP synthase subunit c, found in Limosilactobacillus fermentum (strain NBRC 3956 / LMG 18251) (Lactobacillus fermentum).